A 268-amino-acid polypeptide reads, in one-letter code: NAC domain-containing protein 41 (268 aa).

Positions 15-160 (LPPGFRFHPT…NWVLCRVFLK (146 aa)) constitute an NAC domain. A DNA-binding region spans residues 109 to 166 (VGMKKTLVFYKGKPPNGTRTNWVLHEYRLVDSQQDSLYGQNMNWVLCRVFLKKRSNSN). Residues 166-190 (NSKRKEDEKEEVENEKETETERERE) are disordered. Residues 180 to 190 (EKETETERERE) show a composition bias toward basic and acidic residues.

The protein resides in the nucleus. Its function is as follows. Transcription activator of the mannan synthase CSLA9. Recognizes and binds to DNA-specific sequence of CSLA9 promoter. The chain is NAC domain-containing protein 41 from Arabidopsis thaliana (Mouse-ear cress).